We begin with the raw amino-acid sequence, 216 residues long: Ras-related protein RABE1a (216 aa).

22–29 (GDSGVGKS) contributes to the GTP binding site. Positions 44 to 52 (FITTIGIDF) match the Effector region motif. Residues 70–74 (DTAGQ), 128–131 (NKAD), and 159–160 (SA) each bind GTP. Positions 185-216 (DARAEPQTIKINQSDQGAGTSQATQKSACCGT) are disordered. Positions 193-216 (IKINQSDQGAGTSQATQKSACCGT) are enriched in polar residues. S-geranylgeranyl cysteine attachment occurs at residues cysteine 213 and cysteine 214.

It belongs to the small GTPase superfamily. Rab family. As to quaternary structure, interacts with PI5K2.

The protein localises to the golgi apparatus membrane. The protein resides in the cell membrane. In terms of biological role, involved in membrane trafficking from the Golgi to the plasma membrane. This Arabidopsis thaliana (Mouse-ear cress) protein is Ras-related protein RABE1a (RABE1A).